We begin with the raw amino-acid sequence, 130 residues long: MPKPIKRLSSHKKKRVIFKGIIQIKASFNNTIVTVTNSQGQVITWSSAGACGFKGTKRSTPFAAQIATENAIRTLISQGMKQAEVMISGPGPGRDTALRTIRKSGLVLHFVRDVTPLPHNGCRPPKRRRV.

This sequence belongs to the universal ribosomal protein uS11 family. In terms of assembly, part of the 30S ribosomal subunit.

It localises to the plastid. Its subcellular location is the chloroplast. The chain is Small ribosomal subunit protein uS11c from Psilotum nudum (Whisk fern).